The following is a 245-amino-acid chain: 1-(5-phosphoribosyl)-5-[(5-phosphoribosylamino)methylideneamino] imidazole-4-carboxamide isomerase (245 aa).

Aspartate 8 acts as the Proton acceptor in catalysis. Aspartate 131 (proton donor) is an active-site residue.

The protein belongs to the HisA/HisF family.

It is found in the cytoplasm. It catalyses the reaction 1-(5-phospho-beta-D-ribosyl)-5-[(5-phospho-beta-D-ribosylamino)methylideneamino]imidazole-4-carboxamide = 5-[(5-phospho-1-deoxy-D-ribulos-1-ylimino)methylamino]-1-(5-phospho-beta-D-ribosyl)imidazole-4-carboxamide. The protein operates within amino-acid biosynthesis; L-histidine biosynthesis; L-histidine from 5-phospho-alpha-D-ribose 1-diphosphate: step 4/9. The sequence is that of 1-(5-phosphoribosyl)-5-[(5-phosphoribosylamino)methylideneamino] imidazole-4-carboxamide isomerase from Neisseria meningitidis serogroup C (strain 053442).